A 246-amino-acid chain; its full sequence is UDP-N-acetyl-D-mannosaminuronic acid transferase (246 aa).

The protein belongs to the glycosyltransferase 26 family.

The enzyme catalyses UDP-N-acetyl-alpha-D-mannosaminouronate + N-acetyl-alpha-D-glucosaminyl-di-trans,octa-cis-undecaprenyl diphosphate = beta-D-ManNAcA-(1-&gt;4)-alpha-D-GlcNAc-di-trans,octa-cis-undecaprenyl diphosphate + UDP + H(+). It participates in bacterial outer membrane biogenesis; enterobacterial common antigen biosynthesis. In terms of biological role, catalyzes the synthesis of Und-PP-GlcNAc-ManNAcA (Lipid II), the second lipid-linked intermediate involved in enterobacterial common antigen (ECA) synthesis. This is UDP-N-acetyl-D-mannosaminuronic acid transferase from Salmonella agona (strain SL483).